Consider the following 546-residue polypeptide: Cysteine--tRNA ligase (546 aa).

Position 57 (cysteine 57) interacts with Zn(2+). A 'HIGH' region motif is present at residues 59 to 69; sequence ATVQSSPHIGH. Residues 211–236 are disordered; it reads PSVDATGADKYNPVDPADASPDKHDP. Cysteine 270, histidine 295, and glutamate 299 together coordinate Zn(2+). A 'KMSKS' region motif is present at residues 326–330; it reads KMSKS. ATP is bound at residue lysine 329.

It belongs to the class-I aminoacyl-tRNA synthetase family. Monomer. Zn(2+) is required as a cofactor.

It localises to the cytoplasm. The catalysed reaction is tRNA(Cys) + L-cysteine + ATP = L-cysteinyl-tRNA(Cys) + AMP + diphosphate. In Bifidobacterium longum (strain NCC 2705), this protein is Cysteine--tRNA ligase.